The following is a 515-amino-acid chain: MKATGGPLPLILFLLIIIVLITAQHTAIAKPFFSLNAFAQGQPNDKDDQNMGKFYVYNKAQTNNYADQRMRKFYLYNKDQANDWDDQKMEKFYLYHEGKTNDRDDQKRKNIYLYNEGHANGDDQTMEKFYLFNKDQAKDGDDQKMGKFYLYNKDQANDWDDQKMERFYLYNKGHANEGDDQTMEKFYLYNKGHANEEDDQTMEKFYLYNKGQAKDGDDQKMEKNYLYNKDQANDWDDQKIEKFYLYHEGKANYRDDQNMEKFYLYKKGEEHKYIHSHGHGHVHFPEGAKDLYFFEDNLAPGSVLITRILSARQSSIFLHRNNSKHIPFSMKNITDILTMFSPVSATMADGIAATLQACEHTGMVHGEKAKCATSIESLLDVVVSSLGTKLVRALTPGAPMEGVPSLRYIVASATPVPNSQSMLACHDMLYPYKVFFCHTPKQTRLYQVSLVSGESGRPLIDGLLAVCHQNTSDWDTGHPFFHFMDVKPGETTACHFFGRGSIIWVPVPSVKEATQ.

An N-terminal signal peptide occupies residues 1 to 29 (MKATGGPLPLILFLLIIIVLITAQHTAIA). Residues 292 to 507 (YFFEDNLAPG…GRGSIIWVPV (216 aa)) form the BURP domain. N-linked (GlcNAc...) asparagine glycans are attached at residues Asn321, Asn332, and Asn470.

As to expression, expressed in shoot and panicles.

The polypeptide is BURP domain-containing protein 9 (BURP9) (Oryza sativa subsp. japonica (Rice)).